The primary structure comprises 734 residues: 1,4-alpha-glucan branching enzyme GlgB (734 aa).

Aspartate 417 acts as the Nucleophile in catalysis. Glutamate 470 (proton donor) is an active-site residue.

The protein belongs to the glycosyl hydrolase 13 family. GlgB subfamily. As to quaternary structure, monomer.

The enzyme catalyses Transfers a segment of a (1-&gt;4)-alpha-D-glucan chain to a primary hydroxy group in a similar glucan chain.. The protein operates within glycan biosynthesis; glycogen biosynthesis. Functionally, catalyzes the formation of the alpha-1,6-glucosidic linkages in glycogen by scission of a 1,4-alpha-linked oligosaccharide from growing alpha-1,4-glucan chains and the subsequent attachment of the oligosaccharide to the alpha-1,6 position. This Rhizobium radiobacter (Agrobacterium tumefaciens) protein is 1,4-alpha-glucan branching enzyme GlgB (glgB).